The primary structure comprises 226 residues: Ribonuclease HII (226 aa).

The RNase H type-2 domain maps to 24 to 216 (QRLCGVDEAG…VRKVLERGMV (193 aa)). A divalent metal cation is bound by residues aspartate 30, glutamate 31, and aspartate 125.

This sequence belongs to the RNase HII family. Mn(2+) serves as cofactor. The cofactor is Mg(2+).

The protein localises to the cytoplasm. It catalyses the reaction Endonucleolytic cleavage to 5'-phosphomonoester.. Functionally, endonuclease that specifically degrades the RNA of RNA-DNA hybrids. The sequence is that of Ribonuclease HII from Cupriavidus metallidurans (strain ATCC 43123 / DSM 2839 / NBRC 102507 / CH34) (Ralstonia metallidurans).